The primary structure comprises 262 residues: Protein BcsX (262 aa).

The protein operates within glycan metabolism; bacterial cellulose biosynthesis. In Komagataeibacter xylinus (Gluconacetobacter xylinus), this protein is Protein BcsX (bcsX).